Reading from the N-terminus, the 536-residue chain is Phosphoenolpyruvate carboxykinase (ATP) (536 aa).

Arg-61, Tyr-195, and Lys-201 together coordinate substrate. ATP contacts are provided by residues Lys-201, His-220, and 236–244 (GLSGTGKTT). Mn(2+) is bound by residues Lys-201 and His-220. Asp-257 serves as a coordination point for Mn(2+). The ATP site is built by Glu-285, Arg-322, and Thr-447. Substrate is bound at residue Arg-322.

Belongs to the phosphoenolpyruvate carboxykinase (ATP) family. Mn(2+) serves as cofactor.

It is found in the cytoplasm. The catalysed reaction is oxaloacetate + ATP = phosphoenolpyruvate + ADP + CO2. Its pathway is carbohydrate biosynthesis; gluconeogenesis. Involved in the gluconeogenesis. Catalyzes the conversion of oxaloacetate (OAA) to phosphoenolpyruvate (PEP) through direct phosphoryl transfer between the nucleoside triphosphate and OAA. This Rhizobium etli (strain ATCC 51251 / DSM 11541 / JCM 21823 / NBRC 15573 / CFN 42) protein is Phosphoenolpyruvate carboxykinase (ATP).